The following is a 129-amino-acid chain: Small ribosomal subunit protein uS13 (129 aa).

The span at 92-114 (HKHNLPVRGQRTKTNARTRRGPR) shows a compositional bias: basic residues. The interval 92-129 (HKHNLPVRGQRTKTNARTRRGPRKTVAGRGQKRGATKK) is disordered.

Belongs to the universal ribosomal protein uS13 family. Part of the 30S ribosomal subunit. Forms a loose heterodimer with protein S19. Forms two bridges to the 50S subunit in the 70S ribosome.

In terms of biological role, located at the top of the head of the 30S subunit, it contacts several helices of the 16S rRNA. In the 70S ribosome it contacts the 23S rRNA (bridge B1a) and protein L5 of the 50S subunit (bridge B1b), connecting the 2 subunits; these bridges are implicated in subunit movement. Contacts the tRNAs in the A and P-sites. This is Small ribosomal subunit protein uS13 from Dehalococcoides mccartyi (strain ATCC BAA-2266 / KCTC 15142 / 195) (Dehalococcoides ethenogenes (strain 195)).